Here is a 2259-residue protein sequence, read N- to C-terminus: Protein Ycf2 (2259 aa).

1556 to 1563 is a binding site for ATP; it reads GSQETGRS.

It belongs to the Ycf2 family.

It localises to the plastid. The protein resides in the chloroplast stroma. Functionally, probable ATPase of unknown function. Its presence in a non-photosynthetic plant (Epifagus virginiana) and experiments in tobacco indicate that it has an essential function which is probably not related to photosynthesis. In Physcomitrium patens (Spreading-leaved earth moss), this protein is Protein Ycf2.